The primary structure comprises 356 residues: Peptide chain release factor 1 (356 aa).

Q232 is subject to N5-methylglutamine. The segment at 281 to 301 (ERQSSELSADRKAQVGSGDRS) is disordered.

This sequence belongs to the prokaryotic/mitochondrial release factor family. In terms of processing, methylated by PrmC. Methylation increases the termination efficiency of RF1.

Its subcellular location is the cytoplasm. Functionally, peptide chain release factor 1 directs the termination of translation in response to the peptide chain termination codons UAG and UAA. This is Peptide chain release factor 1 from Desulfovibrio desulfuricans (strain ATCC 27774 / DSM 6949 / MB).